The following is a 969-amino-acid chain: Liprin-beta-1 (969 aa).

S37 is subject to Phosphoserine. Residue T39 is modified to Phosphothreonine. Phosphoserine is present on S40. Residues 99–310 (GDVYQERLAR…CLSRYRKMQD (212 aa)) are a coiled coil. Position 291 is an N6-acetyllysine (K291). 3 disordered regions span residues 342–361 (DLERSTSSTPGMGSPSRDLL), 381–407 (LLPPSVDVDTCEKPKLPTKPETSFEEG), and 424–482 (GVST…RKAR). Over residues 346 to 358 (STSSTPGMGSPSR) the composition is skewed to low complexity. S403 and S435 each carry phosphoserine. The span at 426-438 (STSSLQKSSSLGN) shows a compositional bias: low complexity. A compositionally biased stretch (basic and acidic residues) spans 439–452 (LKKEASDGTDKAPT). Residue K440 forms a Glycyl lysine isopeptide (Lys-Gly) (interchain with G-Cter in SUMO2) linkage. A Phosphoserine modification is found at S500. Residues 518-529 (AGTSRSKGSQGT) are compositionally biased toward polar residues. The segment at 518–593 (AGTSRSKGSQ…PRLGWSRDLG (76 aa)) is disordered. Residue S538 is modified to Phosphoserine. Residues 543–557 (KKSRGIMRLFGKLRR) show a composition bias toward basic residues. Residues S560 and S595 each carry the phosphoserine modification. SAM domains follow at residues 606–670 (WTKE…LGSE) and 678–741 (LDFN…LRIN). Phosphoserine is present on residues S753 and S757. One can recognise an SAM 3 domain in the interval 763 to 835 (VQQWTNHRVM…ATHFNLLIGA (73 aa)). S957, S959, and S961 each carry phosphoserine. T963 carries the phosphothreonine modification.

It belongs to the liprin family. Liprin-beta subfamily. In terms of assembly, forms homodimers and heterodimers. Interacts with S100A4 in a Ca(2+)-dependent mode. Part of a cortical microtubule stabilization complex (CMSC) composed of KANK1, PPFIA1, PPFIBP1, ERC1/ELKS, PHLDB2/LL5beta, CLASPs, KIF21A and possibly additional interactors; within CMSCs KANK1 and PHLDB2/LL5beta seem to be the core components for recruiting microtubule-binding proteins KIF21A and CLASPs, whereas PPFIA1, PPFIBP1 and ERC1/ELKS serve as scaffolds for protein clustering. Interacts with KANK1 (via CC1 domain, residues 244-339).

Its subcellular location is the cytoplasm. The protein resides in the cell cortex. Functionally, may regulate the disassembly of focal adhesions. Did not bind receptor-like tyrosine phosphatases type 2A. This is Liprin-beta-1 (Ppfibp1) from Mus musculus (Mouse).